The sequence spans 298 residues: Nucleoid occlusion protein (298 aa).

The segment at residues 152–171 (EALAQRLGKGQSTVANKLRL) is a DNA-binding region (H-T-H motif).

Belongs to the ParB family.

Its subcellular location is the cytoplasm. The protein resides in the nucleoid. Functionally, effects nucleoid occlusion by binding relatively nonspecifically to DNA and preventing the assembly of the division machinery in the vicinity of the nucleoid, especially under conditions that disturb the cell cycle. It helps to coordinate cell division and chromosome segregation by preventing the formation of the Z ring through the nucleoid, which would cause chromosome breakage. This is Nucleoid occlusion protein from Lysinibacillus sphaericus (strain C3-41).